The primary structure comprises 397 residues: Cysteine protease ATG4A (397 aa).

C79 (nucleophile) is an active-site residue. Residues D279 and H281 contribute to the active site. The LIR signature appears at 392 to 395 (FEIL).

This sequence belongs to the peptidase C54 family.

It is found in the cytoplasm. It catalyses the reaction [protein]-C-terminal L-amino acid-glycyl-phosphatidylethanolamide + H2O = [protein]-C-terminal L-amino acid-glycine + a 1,2-diacyl-sn-glycero-3-phosphoethanolamine. In terms of biological role, cysteine protease that plays a key role in autophagy by mediating both proteolytic activation and delipidation of ATG8 family proteins. The protease activity is required for proteolytic activation of ATG8 family proteins: cleaves the C-terminal amino acid of ATG8 proteins to reveal a C-terminal glycine. Exposure of the glycine at the C-terminus is essential for ATG8 proteins conjugation to phosphatidylethanolamine (PE) and insertion to membranes, which is necessary for autophagy. Protease activity is also required to counteract formation of high-molecular weight conjugates of ATG8 proteins (ATG8ylation): acts as a deubiquitinating-like enzyme that removes ATG8 conjugated to other proteins, such as ATG3. In addition to the protease activity, also mediates delipidation of ATG8 family proteins. Catalyzes delipidation of PE-conjugated forms of ATG8 proteins during macroautophagy. In Xenopus laevis (African clawed frog), this protein is Cysteine protease ATG4A.